Here is an 868-residue protein sequence, read N- to C-terminus: Hopanoid transporter HpnN (868 aa).

Transmembrane regions (helical) follow at residues 16-36 (FAAF…FYTY), 273-293 (GAVV…WMAL), 298-318 (IIFA…AVGL), 326-346 (LLSI…GIQF), 370-390 (YSAV…LSFL), 403-423 (IAGA…PALL), 452-472 (IAII…LYFM), 710-730 (IVAS…ILLW), 740-760 (ALTL…CVLI), 762-782 (LPLN…GVAF), 805-825 (AIFF…LSSH), and 834-854 (LLAL…PALM). The SSD domain maps to 299 to 425 (IFAVAANLVI…ITVLPALLKL (127 aa)).

The protein belongs to the resistance-nodulation-cell division (RND) (TC 2.A.6) family. MmpL subfamily.

The protein localises to the cell inner membrane. In terms of biological role, essential for hopanoid transport from the cytoplasmic to the outer membrane. Required for the C(35) hopanoid, bacteriohopanetetrol, to remain localized to the mother cell type. In Rhodopseudomonas palustris (strain TIE-1), this protein is Hopanoid transporter HpnN.